A 475-amino-acid polypeptide reads, in one-letter code: Probable proline--tRNA ligase, mitochondrial (475 aa).

A mitochondrion-targeting transit peptide spans 1–29 (MEGLLTRCRTLSALAACSLRHCRYIIHKC).

Belongs to the class-II aminoacyl-tRNA synthetase family.

The protein localises to the mitochondrion matrix. It catalyses the reaction tRNA(Pro) + L-proline + ATP = L-prolyl-tRNA(Pro) + AMP + diphosphate. Mitochondrial aminoacyl-tRNA synthetase that catalyzes the specific attachment of the proline amino acid (aa) to the homologous transfer RNA (tRNA), further participating in protein synthesis. The reaction occurs in a two steps: proline is first activated by ATP to form Pro-AMP and then transferred to the acceptor end of tRNA(Pro). The protein is Probable proline--tRNA ligase, mitochondrial (Pars2) of Mus musculus (Mouse).